A 196-amino-acid chain; its full sequence is Nucleoid occlusion factor SlmA (196 aa).

The HTH tetR-type domain occupies 7-68 (TNRREEILQA…GLIEFIEEAL (62 aa)). The segment at residues 31-50 (TTAKLAKQVGVSEAALYRHF) is a DNA-binding region (H-T-H motif). A coiled-coil region spans residues 110 to 142 (HALMFENERLRDRINQLFERIETQLRQILRERK).

This sequence belongs to the nucleoid occlusion factor SlmA family. As to quaternary structure, homodimer. Interacts with FtsZ.

Its subcellular location is the cytoplasm. The protein resides in the nucleoid. Required for nucleoid occlusion (NO) phenomenon, which prevents Z-ring formation and cell division over the nucleoid. Acts as a DNA-associated cell division inhibitor that binds simultaneously chromosomal DNA and FtsZ, and disrupts the assembly of FtsZ polymers. SlmA-DNA-binding sequences (SBS) are dispersed on non-Ter regions of the chromosome, preventing FtsZ polymerization at these regions. This Vibrio campbellii (strain ATCC BAA-1116) protein is Nucleoid occlusion factor SlmA.